The chain runs to 134 residues: Large ribosomal subunit protein uL16c (134 aa).

The span at 1–17 (MLSPKRTRFRKQHRGRM) shows a compositional bias: basic residues. The segment at 1 to 21 (MLSPKRTRFRKQHRGRMKGIS) is disordered.

It belongs to the universal ribosomal protein uL16 family. As to quaternary structure, part of the 50S ribosomal subunit.

The protein localises to the plastid. Its subcellular location is the chloroplast. This Solanum bulbocastanum (Wild potato) protein is Large ribosomal subunit protein uL16c.